The primary structure comprises 298 residues: Inosose dehydratase (298 aa).

This sequence belongs to the IolE/MocC family. Glutathione serves as cofactor. It depends on Co(2+) as a cofactor. Requires Mn(2+) as cofactor.

The catalysed reaction is scyllo-inosose = 3D-3,5/4-trihydroxycyclohexane-1,2-dione + H2O. Its function is as follows. Catalyzes the dehydration of inosose (2-keto-myo-inositol, 2KMI or 2,4,6/3,5-pentahydroxycyclohexanone) to 3D-(3,5/4)-trihydroxycyclohexane-1,2-dione (D-2,3-diketo-4-deoxy-epi-inositol). The sequence is that of Inosose dehydratase from Erwinia tasmaniensis (strain DSM 17950 / CFBP 7177 / CIP 109463 / NCPPB 4357 / Et1/99).